The sequence spans 244 residues: Rho-related GTP-binding protein RhoE (244 aa).

Gly-30–Thr-37 serves as a coordination point for GTP. Residues Tyr-52–Tyr-60 carry the Effector region motif. GTP-binding positions include Asp-77–Ser-81 and Cys-135–Asp-138. Cys-241 bears the Cysteine methyl ester mark. Cys-241 carries S-farnesyl cysteine lipidation. Residues Thr-242–Met-244 constitute a propeptide, removed in mature form.

Belongs to the small GTPase superfamily. Rho family. In terms of assembly, binds ROCK1. Interacts with UBXD5. In terms of tissue distribution, ubiquitous.

The protein resides in the golgi apparatus membrane. Functionally, binds GTP but lacks intrinsic GTPase activity and is resistant to Rho-specific GTPase-activating proteins. The chain is Rho-related GTP-binding protein RhoE (RND3) from Homo sapiens (Human).